Here is a 260-residue protein sequence, read N- to C-terminus: Tryptophan synthase alpha chain (260 aa).

Residues Glu-52 and Asp-63 each act as proton acceptor in the active site.

Belongs to the TrpA family. Tetramer of two alpha and two beta chains.

The enzyme catalyses (1S,2R)-1-C-(indol-3-yl)glycerol 3-phosphate + L-serine = D-glyceraldehyde 3-phosphate + L-tryptophan + H2O. It functions in the pathway amino-acid biosynthesis; L-tryptophan biosynthesis; L-tryptophan from chorismate: step 5/5. In terms of biological role, the alpha subunit is responsible for the aldol cleavage of indoleglycerol phosphate to indole and glyceraldehyde 3-phosphate. In Streptococcus thermophilus (strain ATCC BAA-250 / LMG 18311), this protein is Tryptophan synthase alpha chain.